Consider the following 432-residue polypeptide: MEMEKEFEQIDKAGNWAAIYQDIRHEASDFPCRIAKLPKNKNRNRYRDVSPFDHSRIKLHQEDNDYINASLIKMEEAQRSYILTQGPLPNTCGHFWEMVWEQKSRGVVMLNRIMEKGSLKCAQYWPQKEEKEMVFDDTNLKLTLISEDVKSYYTVRQLELENLATQEAREILHFHYTTWPDFGVPESPASFLNFLFKVRESGSLSPEHGPIVVHCSAGIGRSGTFCLADTCLLLMDKRKDPSSVDIKKVLLEMRRFRMGLIQTADQLRFSYLAVIEGAKFIMGDSSVQDQWKELSHEDLEPPPEHVPPPPRPPKRTLEPHNGKCKELFSNHQWVSEESCEDEDILAREESRAPSIAVHSMSSMSQDTEVRKRMVGGGLQSAQASVPTEEELSPTEEEQKAHRPVHWKPFLVNVCMATALATGAYLCYRVCFH.

An N-acetylmethionine modification is found at methionine 1. The Tyrosine-protein phosphatase domain maps to 3–277 (MEKEFEQIDK…RFSYLAVIEG (275 aa)). Tyrosine 20 is modified (phosphotyrosine). Serine 50 is modified (phosphoserine; by PKB/AKT1, CLK1 and CLK2). Position 66 is a phosphotyrosine; by EGFR (tyrosine 66). Substrate-binding positions include aspartate 181 and 215-221 (CSAGIGR). Cysteine 215 functions as the Phosphocysteine intermediate in the catalytic mechanism. The residue at position 215 (cysteine 215) is a Cysteine persulfide. An S-nitrosocysteine; in reversibly inhibited form modification is found at cysteine 215. A phosphoserine; by CLK1 and CLK2 mark is found at serine 242 and serine 243. Glutamine 262 contributes to the substrate binding site. The disordered stretch occupies residues 297 to 322 (EDLEPPPEHVPPPPRPPKRTLEPHNG). Serine 335, serine 362, and serine 364 each carry phosphoserine. The tract at residues 350–402 (SRAPSIAVHSMSSMSQDTEVRKRMVGGGLQSAQASVPTEEELSPTEEEQKAHR) is disordered. Threonine 367 is subject to Phosphothreonine.

The protein belongs to the protein-tyrosine phosphatase family. Non-receptor class 1 subfamily. Interacts with EPHA3 (phosphorylated); dephosphorylates EPHA3 and may regulate its trafficking and function. Interacts with MET. Interacts with NCK1. Post-translationally, ser-50 is the major site of phosphorylation as compared to Ser-242 and Ser-243. Activated by phosphorylation at Ser-50. S-nitrosylation of Cys-215 inactivates the enzyme activity. In terms of processing, sulfhydration at Cys-215 following endoplasmic reticulum stress inactivates the enzyme activity, promoting EIF2AK3/PERK activity. As to expression, found in several tissues including central nervous system, liver and kidney. A high level of expression was found in the hippocampus.

The protein localises to the endoplasmic reticulum membrane. It catalyses the reaction O-phospho-L-tyrosyl-[protein] + H2O = L-tyrosyl-[protein] + phosphate. Its function is as follows. Tyrosine-protein phosphatase which acts as a regulator of endoplasmic reticulum unfolded protein response. Mediates dephosphorylation of EIF2AK3/PERK; inactivating the protein kinase activity of EIF2AK3/PERK. May play an important role in CKII- and p60c-src-induced signal transduction cascades. May regulate the EFNA5-EPHA3 signaling pathway which modulates cell reorganization and cell-cell repulsion. May also regulate the hepatocyte growth factor receptor signaling pathway through dephosphorylation of MET. The protein is Tyrosine-protein phosphatase non-receptor type 1 (Ptpn1) of Rattus norvegicus (Rat).